A 599-amino-acid chain; its full sequence is Zinc metalloproteinase dpy-31 (599 aa).

An N-terminal signal peptide occupies residues 1–22 (MALLKPFLSRTFSSFFATITGG). Residues 23 to 211 (RNLIDSIEEL…IQHGRRTKRK (189 aa)) constitute a propeptide that is removed on maturation. The Peptidase M12A domain occupies 211–410 (KFIRSELRRW…IRLMNVIYCS (200 aa)). A glycan (N-linked (GlcNAc...) asparagine) is linked at asparagine 251. Disulfide bonds link cysteine 254-cysteine 409, cysteine 277-cysteine 298, cysteine 413-cysteine 433, cysteine 435-cysteine 444, and cysteine 455-cysteine 483. Histidine 306 is a Zn(2+) binding site. Glutamate 307 is an active-site residue. Residues histidine 310 and histidine 316 each contribute to the Zn(2+) site. Residues 405-445 (NVIYCSDSCAQKLPCQRGGYTDPRRCGRCRCPDGFTGKLCE) form the EGF-like domain. Residues 455–571 (CGGRIELTSS…KGFQAQVRAL (117 aa)) enclose the CUB domain. Asparagine 522 is a glycosylation site (N-linked (GlcNAc...) asparagine).

It depends on Zn(2+) as a cofactor.

It is found in the secreted. Inhibited by marimastat and tripeptide hydroxamic acids. Functionally, metalloprotease which cleaves the carboxyl terminus of procollagens to mature collagens. Probably involved in cuticular collagen maturation. The chain is Zinc metalloproteinase dpy-31 from Brugia malayi (Filarial nematode worm).